The sequence spans 385 residues: ATP phosphoribosyltransferase regulatory subunit (385 aa).

This sequence belongs to the class-II aminoacyl-tRNA synthetase family. HisZ subfamily. In terms of assembly, heteromultimer composed of HisG and HisZ subunits.

It localises to the cytoplasm. The protein operates within amino-acid biosynthesis; L-histidine biosynthesis; L-histidine from 5-phospho-alpha-D-ribose 1-diphosphate: step 1/9. Functionally, required for the first step of histidine biosynthesis. May allow the feedback regulation of ATP phosphoribosyltransferase activity by histidine. This is ATP phosphoribosyltransferase regulatory subunit from Bordetella petrii (strain ATCC BAA-461 / DSM 12804 / CCUG 43448).